The primary structure comprises 101 residues: NADH-quinone oxidoreductase subunit K (101 aa).

A run of 3 helical transmembrane segments spans residues 4–24, 30–50, and 61–81; these read LAHY…GIFL, IIIL…FVAF, and IFVF…LAIL.

It belongs to the complex I subunit 4L family. In terms of assembly, NDH-1 is composed of 14 different subunits. Subunits NuoA, H, J, K, L, M, N constitute the membrane sector of the complex.

It localises to the cell inner membrane. It catalyses the reaction a quinone + NADH + 5 H(+)(in) = a quinol + NAD(+) + 4 H(+)(out). Functionally, NDH-1 shuttles electrons from NADH, via FMN and iron-sulfur (Fe-S) centers, to quinones in the respiratory chain. The immediate electron acceptor for the enzyme in this species is believed to be ubiquinone. Couples the redox reaction to proton translocation (for every two electrons transferred, four hydrogen ions are translocated across the cytoplasmic membrane), and thus conserves the redox energy in a proton gradient. The sequence is that of NADH-quinone oxidoreductase subunit K from Paraburkholderia phymatum (strain DSM 17167 / CIP 108236 / LMG 21445 / STM815) (Burkholderia phymatum).